The primary structure comprises 137 residues: DNA-binding protein H-NS (137 aa).

The DNA-binding element occupies 112-117; the sequence is QGRTPA.

Belongs to the histone-like protein H-NS family. Homodimer that oligomerizes on DNA into higher-order complexes that form bridges between disparate regions of DNA compacting it. Interacts with Hha, Cnu and StpA.

The protein resides in the cytoplasm. It localises to the nucleoid. Functionally, a DNA-binding protein implicated in transcriptional repression and chromosome organization and compaction. Binds nucleation sites in AT-rich DNA and bridges them, forming higher-order nucleoprotein complexes and condensing the chromosome. As many horizontally transferred genes are AT-rich, it plays a central role in silencing foreign genes. A subset of genes are repressed by H-NS in association with other proteins. The protein is DNA-binding protein H-NS (hns) of Escherichia coli O6:H1 (strain CFT073 / ATCC 700928 / UPEC).